The following is a 259-amino-acid chain: MSGPILVFDSGIGGLSVMNEIRKQLPLHDYCYLFDNARLPYGNLSEQELITGCVALITHHARRLNASIVVVACNTASTLVLPLLRQQLTIPIVGVVPAIKPAAMLSKKKHIGLLATPGTVKRDYTQALINQFAGNCKVELFGTSDLVLLAEQYVAQQQIDMDKLNEILAPIAASNIDVLVLGCTHFPMIATEISHYLGEGVTLLDSGEAVAKRVRFLLSKESNSNKQLQACYTKDIGQGLKAALVDYGFSDFSLVTITD.

Residues 9–10 (DS) and 41–42 (YG) each bind substrate. C73 acts as the Proton donor/acceptor in catalysis. Residue 74–75 (NT) participates in substrate binding. C183 (proton donor/acceptor) is an active-site residue. 184 to 185 (TH) serves as a coordination point for substrate.

Belongs to the aspartate/glutamate racemases family.

The enzyme catalyses L-glutamate = D-glutamate. The protein operates within cell wall biogenesis; peptidoglycan biosynthesis. In terms of biological role, provides the (R)-glutamate required for cell wall biosynthesis. The protein is Glutamate racemase of Shewanella frigidimarina (strain NCIMB 400).